Reading from the N-terminus, the 153-residue chain is FAD synthase (153 aa).

Residues 9–10 (TF), 14–17 (HPGH), Asp-97, and Tyr-124 each bind ATP.

Belongs to the archaeal FAD synthase family. Homodimer. Requires a divalent metal cation as cofactor.

The catalysed reaction is FMN + ATP + H(+) = FAD + diphosphate. Its pathway is cofactor biosynthesis; FAD biosynthesis; FAD from FMN: step 1/1. Its function is as follows. Catalyzes the transfer of the AMP portion of ATP to flavin mononucleotide (FMN) to produce flavin adenine dinucleotide (FAD) coenzyme. This Methanobrevibacter smithii (strain ATCC 35061 / DSM 861 / OCM 144 / PS) protein is FAD synthase.